We begin with the raw amino-acid sequence, 1113 residues long: Carbamoyl phosphate synthase large chain (1113 aa).

The interval 1–407 is carboxyphosphate synthetic domain; that stretch reads MPKRSDINHV…ALNKALRSLE (407 aa). ATP-binding residues include R134, R174, G180, G181, E213, I215, E220, G246, V247, H248, Q290, and E304. An ATP-grasp 1 domain is found at 138-333; the sequence is KDIVTTIGGE…IAKMAAKLAI (196 aa). Mg(2+)-binding residues include Q290, E304, and N306. Mn(2+) contacts are provided by Q290, E304, and N306. The segment at 408–565 is oligomerization domain; sequence TKQQGFWTKP…ELDPAAESEV (158 aa). The tract at residues 566 to 967 is carbamoyl phosphate synthetic domain; that stretch reads APQTEREKVL…AYAKAEAGAF (402 aa). The region spanning 695–886 is the ATP-grasp 2 domain; that stretch reads GALLNREQLP…LAKAASRIAV (192 aa). 10 residues coordinate ATP: R731, R770, L772, E777, G802, I803, H804, S805, Q845, and E857. Positions 845, 857, and 859 each coordinate Mg(2+). Residues Q845, E857, and N859 each coordinate Mn(2+). Residues 968-1113 enclose the MGS-like domain; the sequence is GALPTEGTVF…LQELDHAVKA (146 aa). An allosteric domain region spans residues 968–1113; sequence GALPTEGTVF…LQELDHAVKA (146 aa).

This sequence belongs to the CarB family. In terms of assembly, composed of two chains; the small (or glutamine) chain promotes the hydrolysis of glutamine to ammonia, which is used by the large (or ammonia) chain to synthesize carbamoyl phosphate. Tetramer of heterodimers (alpha,beta)4. Mg(2+) serves as cofactor. Mn(2+) is required as a cofactor.

It catalyses the reaction hydrogencarbonate + L-glutamine + 2 ATP + H2O = carbamoyl phosphate + L-glutamate + 2 ADP + phosphate + 2 H(+). The catalysed reaction is hydrogencarbonate + NH4(+) + 2 ATP = carbamoyl phosphate + 2 ADP + phosphate + 2 H(+). The protein operates within amino-acid biosynthesis; L-arginine biosynthesis; carbamoyl phosphate from bicarbonate: step 1/1. It participates in pyrimidine metabolism; UMP biosynthesis via de novo pathway; (S)-dihydroorotate from bicarbonate: step 1/3. In terms of biological role, large subunit of the glutamine-dependent carbamoyl phosphate synthetase (CPSase). CPSase catalyzes the formation of carbamoyl phosphate from the ammonia moiety of glutamine, carbonate, and phosphate donated by ATP, constituting the first step of 2 biosynthetic pathways, one leading to arginine and/or urea and the other to pyrimidine nucleotides. The large subunit (synthetase) binds the substrates ammonia (free or transferred from glutamine from the small subunit), hydrogencarbonate and ATP and carries out an ATP-coupled ligase reaction, activating hydrogencarbonate by forming carboxy phosphate which reacts with ammonia to form carbamoyl phosphate. The protein is Carbamoyl phosphate synthase large chain of Corynebacterium glutamicum (strain ATCC 13032 / DSM 20300 / JCM 1318 / BCRC 11384 / CCUG 27702 / LMG 3730 / NBRC 12168 / NCIMB 10025 / NRRL B-2784 / 534).